We begin with the raw amino-acid sequence, 154 residues long: Transcriptional repressor NrdR (154 aa).

The segment at 3–34 (CPFCGAHDTKVIDSRLVAEGDQVRRRRECLAC) is a zinc-finger region. The ATP-cone domain occupies 49–139 (PRLIKQDGSR…VYRRFQDLNE (91 aa)).

Belongs to the NrdR family. It depends on Zn(2+) as a cofactor.

Its function is as follows. Negatively regulates transcription of bacterial ribonucleotide reductase nrd genes and operons by binding to NrdR-boxes. The polypeptide is Transcriptional repressor NrdR (Pseudomonas aeruginosa (strain LESB58)).